Reading from the N-terminus, the 454-residue chain is Asparagine--tRNA ligase (454 aa).

It belongs to the class-II aminoacyl-tRNA synthetase family. As to quaternary structure, homodimer.

It is found in the cytoplasm. The enzyme catalyses tRNA(Asn) + L-asparagine + ATP = L-asparaginyl-tRNA(Asn) + AMP + diphosphate + H(+). This Microcystis aeruginosa (strain NIES-843 / IAM M-2473) protein is Asparagine--tRNA ligase.